A 279-amino-acid polypeptide reads, in one-letter code: MITGRTALYGVLGNPVRHSRSPQMQAAAFEHLGLDATYVALPVEPERLPAAVAGAHALGFQGLNVTVPHKRAVVALCEAVDPVAREVGAVNTLRRTERGWEGFNTDAAACLMLLREEGLRPGAPALLAGAGGAARAAAWALVRAGAVLRIAARRQDAAERLAAELGPLAGPGTPAPVAVPWGALEAEADAAEAVVNGTTVGLHPEDAPLPLRVRAGQLVADFVYGDTPLARAARDAGARLVSGERILVRQGALSFALWTGRAAPEALMAAAIAAPGRAT.

Shikimate is bound by residues 19–21 (SRS) and threonine 66. Lysine 70 acts as the Proton acceptor in catalysis. Residues asparagine 91 and aspartate 106 each contribute to the shikimate site. NADP(+) is bound by residues 129–133 (GAGGA) and phenylalanine 222. Tyrosine 224 is a binding site for shikimate. Glycine 243 lines the NADP(+) pocket.

This sequence belongs to the shikimate dehydrogenase family. Homodimer.

The catalysed reaction is shikimate + NADP(+) = 3-dehydroshikimate + NADPH + H(+). It functions in the pathway metabolic intermediate biosynthesis; chorismate biosynthesis; chorismate from D-erythrose 4-phosphate and phosphoenolpyruvate: step 4/7. Functionally, involved in the biosynthesis of the chorismate, which leads to the biosynthesis of aromatic amino acids. Catalyzes the reversible NADPH linked reduction of 3-dehydroshikimate (DHSA) to yield shikimate (SA). This Anaeromyxobacter sp. (strain Fw109-5) protein is Shikimate dehydrogenase (NADP(+)).